The following is a 75-amino-acid chain: DNA-directed RNA polymerase subunit epsilon (75 aa).

Belongs to the RNA polymerase subunit epsilon family. In terms of assembly, RNAP is composed of a core of 2 alpha, a beta and a beta' subunit. The core is associated with a delta subunit, and at least one of epsilon or omega. When a sigma factor is associated with the core the holoenzyme is formed, which can initiate transcription.

It catalyses the reaction RNA(n) + a ribonucleoside 5'-triphosphate = RNA(n+1) + diphosphate. A non-essential component of RNA polymerase (RNAP). This Lactobacillus gasseri (strain ATCC 33323 / DSM 20243 / BCRC 14619 / CIP 102991 / JCM 1131 / KCTC 3163 / NCIMB 11718 / NCTC 13722 / AM63) protein is DNA-directed RNA polymerase subunit epsilon.